The following is a 700-amino-acid chain: Polyribonucleotide nucleotidyltransferase (700 aa).

Aspartate 491 and aspartate 497 together coordinate Mg(2+). The region spanning 558 to 617 is the KH domain; sequence PNYAVIEINPDKIRDVIGKGGATIRQLTEETGAVIDIDDAGTIRIFGENKAATKAAIAKI. An S1 motif domain is found at 627–695; the sequence is GKTYEGTVAR…NRGRIKLTMK (69 aa).

Belongs to the polyribonucleotide nucleotidyltransferase family. In terms of assembly, component of the RNA degradosome, which is a multiprotein complex involved in RNA processing and mRNA degradation. Mg(2+) is required as a cofactor.

It localises to the cytoplasm. The enzyme catalyses RNA(n+1) + phosphate = RNA(n) + a ribonucleoside 5'-diphosphate. Its function is as follows. Involved in mRNA degradation. Catalyzes the phosphorolysis of single-stranded polyribonucleotides processively in the 3'- to 5'-direction. The sequence is that of Polyribonucleotide nucleotidyltransferase from Psychrobacter arcticus (strain DSM 17307 / VKM B-2377 / 273-4).